A 929-amino-acid polypeptide reads, in one-letter code: Isoleucine--tRNA ligase (929 aa).

A 'HIGH' region motif is present at residues 58-68 (PYANGDIHIGH). Glutamate 568 is an L-isoleucyl-5'-AMP binding site. A 'KMSKS' region motif is present at residues 609–613 (KMSKS). Lysine 612 serves as a coordination point for ATP. Zn(2+) contacts are provided by cysteine 892, cysteine 895, cysteine 912, and cysteine 915.

Belongs to the class-I aminoacyl-tRNA synthetase family. IleS type 1 subfamily. As to quaternary structure, monomer. Zn(2+) is required as a cofactor.

It localises to the cytoplasm. The enzyme catalyses tRNA(Ile) + L-isoleucine + ATP = L-isoleucyl-tRNA(Ile) + AMP + diphosphate. Catalyzes the attachment of isoleucine to tRNA(Ile). As IleRS can inadvertently accommodate and process structurally similar amino acids such as valine, to avoid such errors it has two additional distinct tRNA(Ile)-dependent editing activities. One activity is designated as 'pretransfer' editing and involves the hydrolysis of activated Val-AMP. The other activity is designated 'posttransfer' editing and involves deacylation of mischarged Val-tRNA(Ile). The sequence is that of Isoleucine--tRNA ligase from Thiobacillus denitrificans (strain ATCC 25259 / T1).